A 157-amino-acid chain; its full sequence is Ribosome maturation factor RimP (157 aa).

It belongs to the RimP family.

It localises to the cytoplasm. Functionally, required for maturation of 30S ribosomal subunits. The polypeptide is Ribosome maturation factor RimP (Synechococcus sp. (strain CC9311)).